Reading from the N-terminus, the 470-residue chain is MSKLVISTSIFQSQVADLLPCNNHQKSQLTYSLINAYDLLQHFDEVLTFPYARKDDLLEFHSKSYIDYLINGRFNKMMAQDVNNPMVESKWSELSELADNWNEKIDYNPSQDLQRFTTRENLYNYYLNHSQALENNMDCINNSEVPTNDKPTDTYILNSETKQYNLEGDCPIFSYLPMYCQVITGATLNLLDHLSPTERLIGINWDGGRHHAFKQRASGFCYINDVVLLIQRLRKAKLNKITYVDFDLHHGDGVEKAFQYSKQIQTISVHLYEPGFFPGTGSLSDSRKDKNVVNIPLKHGCDDNYLELIASKIVNPLIERHEPEALIIECGGDGLLGDRFNEWQLTIRGLSRIIINIMKSYPRAHIFLLGGGGYNDLLMSRFYTYLTWCVTKQFSNLRCGDNNSFQIDPFDVCDGDDSEQFIREHDLVEMYNEENYQYWIYEMEGSSRMKMLRNDNKDRDMVELMKFYEL.

Residues 47–392 (LTFPYARKDD…YTYLTWCVTK (346 aa)) form a histone deacetylase region. Ser110 carries the post-translational modification Phosphoserine. Residue His211 is part of the active site.

This sequence belongs to the histone deacetylase family. HD type 1 subfamily.

It localises to the nucleus. The enzyme catalyses N(6)-acetyl-L-lysyl-[histone] + H2O = L-lysyl-[histone] + acetate. Functionally, responsible for the deacetylation of lysine residues on the N-terminal part of the core histones (H2A, H2B, H3 and H4). Histone deacetylation plays an important role in transcriptional regulation, cell cycle progression and developmental events. Histone deacetylases act via the formation of large multiprotein complexes. In Saccharomyces cerevisiae (strain ATCC 204508 / S288c) (Baker's yeast), this protein is Histone deacetylase HOS1 (HOS1).